The sequence spans 96 residues: Large ribosomal subunit protein uL23 (96 aa).

It belongs to the universal ribosomal protein uL23 family. Part of the 50S ribosomal subunit. Contacts protein L29, and trigger factor when it is bound to the ribosome.

Its function is as follows. One of the early assembly proteins it binds 23S rRNA. One of the proteins that surrounds the polypeptide exit tunnel on the outside of the ribosome. Forms the main docking site for trigger factor binding to the ribosome. This Aster yellows witches'-broom phytoplasma (strain AYWB) protein is Large ribosomal subunit protein uL23.